A 278-amino-acid chain; its full sequence is 4-deoxy-L-threo-5-hexosulose-uronate ketol-isomerase (278 aa).

Zn(2+)-binding residues include H196, H198, E203, and H245.

The protein belongs to the KduI family. It depends on Zn(2+) as a cofactor.

It carries out the reaction 5-dehydro-4-deoxy-D-glucuronate = 3-deoxy-D-glycero-2,5-hexodiulosonate. It functions in the pathway glycan metabolism; pectin degradation; 2-dehydro-3-deoxy-D-gluconate from pectin: step 4/5. In terms of biological role, catalyzes the isomerization of 5-dehydro-4-deoxy-D-glucuronate to 3-deoxy-D-glycero-2,5-hexodiulosonate. This is 4-deoxy-L-threo-5-hexosulose-uronate ketol-isomerase from Salmonella heidelberg (strain SL476).